Consider the following 120-residue polypeptide: Small ribosomal subunit protein eS24 (120 aa).

Positions 101 to 120 (RDAGTKQKKGGSKGGQGAKG) are disordered.

The protein belongs to the eukaryotic ribosomal protein eS24 family.

The sequence is that of Small ribosomal subunit protein eS24 from Saccharolobus islandicus (strain M.16.27) (Sulfolobus islandicus).